The chain runs to 418 residues: UDP-N-acetylglucosamine 1-carboxyvinyltransferase (418 aa).

22–23 contacts phosphoenolpyruvate; that stretch reads KN. Arg-92 is a binding site for UDP-N-acetyl-alpha-D-glucosamine. Cys-116 (proton donor) is an active-site residue. Residue Cys-116 is modified to 2-(S-cysteinyl)pyruvic acid O-phosphothioketal. UDP-N-acetyl-alpha-D-glucosamine-binding positions include 121–125, Asp-305, and Leu-327; that span reads RPIDL.

It belongs to the EPSP synthase family. MurA subfamily.

It localises to the cytoplasm. The enzyme catalyses phosphoenolpyruvate + UDP-N-acetyl-alpha-D-glucosamine = UDP-N-acetyl-3-O-(1-carboxyvinyl)-alpha-D-glucosamine + phosphate. Its pathway is cell wall biogenesis; peptidoglycan biosynthesis. Cell wall formation. Adds enolpyruvyl to UDP-N-acetylglucosamine. In Campylobacter jejuni subsp. jejuni serotype O:23/36 (strain 81-176), this protein is UDP-N-acetylglucosamine 1-carboxyvinyltransferase.